The primary structure comprises 902 residues: Zinc finger CCCH-type antiviral protein 1 (902 aa).

An N-acetylalanine modification is found at Ala2. The N-terminal domain stretch occupies residues 2 to 254 (ADPEVCCFIT…ARSKSRDRFF (253 aa)). A Nuclear localization signal motif is present at residues 69-76 (RARVCRRK). C3H1-type zinc fingers lie at residues 73–86 (CRRK…DNLH), 88–110 (CKLN…KYSH), 150–172 (CKSY…SRLH), and 169–193 (SRLH…SHNL). The interval 221–251 (SKHMQKNPPGPRAPSSHRRNMAYRARSKSRD) is disordered. Positions 224-254 (MQKNPPGPRAPSSHRRNMAYRARSKSRDRFF) are binding to EXOSC5. Positions 235-247 (SSHRRNMAYRARS) are enriched in basic residues. 4 positions are modified to phosphoserine; by GSK3-beta: Ser257, Ser263, Ser267, and Ser271. The segment covering 265-278 (SASAERSCTPSPDQ) has biased composition (polar residues). Disordered stretches follow at residues 265-287 (SASA…SLED) and 299-373 (YLGS…GARR). Thr273 carries the phosphothreonine modification. A phosphoserine mark is found at Ser275 and Ser284. Positions 285 to 292 (LEDAPVDD) match the Nuclear export signal motif. Phosphoserine occurs at positions 302, 327, 335, 355, 378, and 387. 2 stretches are compositionally biased toward polar residues: residues 310-336 (SGSS…NGSQ) and 344-369 (PGST…TNDQ). Thr393 carries the phosphothreonine modification. Phosphoserine occurs at positions 407, 469, 492, and 494. Residues 445–481 (LNYKSTSSGHREISSPRIQDAGPASRDVQATGRIADD) are disordered. At Thr554 the chain carries Phosphothreonine. Phosphoserine occurs at positions 572 and 590. Residues 594–681 (SVTKPANSVF…ASKTQKDVIR (88 aa)) enclose the WWE domain. Positions 716–902 (PQEDFCFLSS…YTEDKACVIS (187 aa)) constitute a PARP catalytic domain.

This sequence belongs to the ARTD/PARP family. In terms of assembly, homodimer or homooligomer. Homooligomerization is essential for its antiviral activity. Interacts with EXOSC5. Interacts (via N-terminal domain) with DDX17 in an RNA-independent manner. Interacts with EXOSC3, EXOSC7, DCP2 and DCP1A. Interacts with PARN in an RNA-independent manner. Interacts with XRN1 in an RNA-dependent manner. Isoform 2 interacts (via zinc-fingers) with RIGI in an RNA-dependent manner. Interacts (via N-terminal domain) with DHX30 (via N-terminus) in an RNA-independent manner. Phosphorylation at Ser-275 is essential for sequential phosphorylation of Ser-271, Ser-267, Ser-263 and Ser-257 by GSK3-beta. Phosphorylation by GSK3-beta enhances its antiviral activity.

The protein localises to the cytoplasm. It localises to the nucleus. In terms of biological role, antiviral protein which inhibits the replication of viruses by recruiting the cellular RNA degradation machineries to degrade the viral mRNAs. Binds to a ZAP-responsive element (ZRE) present in the target viral mRNA, recruits cellular poly(A)-specific ribonuclease PARN to remove the poly(A) tail, and the 3'-5' exoribonuclease complex exosome to degrade the RNA body from the 3'-end. It also recruits the decapping complex DCP1-DCP2 through RNA helicase p72 (DDX17) to remove the cap structure of the viral mRNA to initiate its degradation from the 5'-end. Its target viruses belong to families which include retroviridae: human immunodeficiency virus type 1 (HIV-1), moloney and murine leukemia virus (MoMLV) and xenotropic MuLV-related virus (XMRV), filoviridae: ebola virus (EBOV) and marburg virus (MARV), togaviridae: sindbis virus (SINV) and Ross river virus (RRV). Specifically targets the multiply spliced but not unspliced or singly spliced HIV-1 mRNAs for degradation. Isoform 1 is a more potent viral inhibitor than isoform 2. Isoform 2 acts as a positive regulator of RIGI signaling resulting in activation of the downstream effector IRF3 leading to the expression of type I IFNs and IFN stimulated genes (ISGs). In Homo sapiens (Human), this protein is Zinc finger CCCH-type antiviral protein 1.